The chain runs to 152 residues: UPF0178 protein Bcer98_3021 (152 aa).

It belongs to the UPF0178 family.

The polypeptide is UPF0178 protein Bcer98_3021 (Bacillus cytotoxicus (strain DSM 22905 / CIP 110041 / 391-98 / NVH 391-98)).